Consider the following 384-residue polypeptide: Anhydro-N-acetylmuramic acid kinase (384 aa).

17–24 (GTSMDGVD) lines the ATP pocket.

Belongs to the anhydro-N-acetylmuramic acid kinase family.

It carries out the reaction 1,6-anhydro-N-acetyl-beta-muramate + ATP + H2O = N-acetyl-D-muramate 6-phosphate + ADP + H(+). Its pathway is amino-sugar metabolism; 1,6-anhydro-N-acetylmuramate degradation. The protein operates within cell wall biogenesis; peptidoglycan recycling. Its function is as follows. Catalyzes the specific phosphorylation of 1,6-anhydro-N-acetylmuramic acid (anhMurNAc) with the simultaneous cleavage of the 1,6-anhydro ring, generating MurNAc-6-P. Is required for the utilization of anhMurNAc either imported from the medium or derived from its own cell wall murein, and thus plays a role in cell wall recycling. This Burkholderia thailandensis (strain ATCC 700388 / DSM 13276 / CCUG 48851 / CIP 106301 / E264) protein is Anhydro-N-acetylmuramic acid kinase.